The chain runs to 113 residues: Photosystem II reaction center Psb28 protein (113 aa).

This sequence belongs to the Psb28 family. In terms of assembly, part of the photosystem II complex.

The protein resides in the cellular thylakoid membrane. This is Photosystem II reaction center Psb28 protein from Trichodesmium erythraeum (strain IMS101).